The following is a 313-amino-acid chain: Methionyl-tRNA formyltransferase (313 aa).

109-112 contacts (6S)-5,6,7,8-tetrahydrofolate; that stretch reads SLLP.

It belongs to the Fmt family.

The catalysed reaction is L-methionyl-tRNA(fMet) + (6R)-10-formyltetrahydrofolate = N-formyl-L-methionyl-tRNA(fMet) + (6S)-5,6,7,8-tetrahydrofolate + H(+). In terms of biological role, attaches a formyl group to the free amino group of methionyl-tRNA(fMet). The formyl group appears to play a dual role in the initiator identity of N-formylmethionyl-tRNA by promoting its recognition by IF2 and preventing the misappropriation of this tRNA by the elongation apparatus. In Thermotoga sp. (strain RQ2), this protein is Methionyl-tRNA formyltransferase.